Here is a 121-residue protein sequence, read N- to C-terminus: Type II secretion system protein I (121 aa).

Residues 1–6 (MNKQKG) constitute a propeptide, leader sequence. Methionine 7 carries the post-translational modification N-methylmethionine. Residues 7 to 27 (MTLLEVLVALAIFSLAGLTLL) traverse the membrane as a helical segment.

The protein belongs to the GSP I family. Type II secretion is composed of four main components: the outer membrane complex, the inner membrane complex, the cytoplasmic secretion ATPase and the periplasm-spanning pseudopilus. Interacts with core component PulG. Interacts with pseudopilins PulJ and PulK. Post-translationally, cleaved by prepilin peptidase. In terms of processing, methylated by prepilin peptidase at the amino group of the N-terminal methionine once the leader sequence is cleaved by prepilin peptidase.

The protein localises to the cell inner membrane. Component of the type II secretion system required for the energy-dependent secretion of extracellular factors such as proteases and toxins from the periplasm. Part of the pseudopilus tip complex that is critical for the recognition and binding of secretion substrates. The sequence is that of Type II secretion system protein I (pulI) from Klebsiella michiganensis (strain ATCC 8724 / DSM 4798 / JCM 20051 / NBRC 3318 / NRRL B-199 / KCTC 1686 / BUCSAV 143 / CCM 1901).